We begin with the raw amino-acid sequence, 489 residues long: uncharacterized protein (489 aa).

11 helical membrane-spanning segments follow: residues Phe29–Gly49, Leu67–Gly87, Trp90–Asp110, Ile119–Ile139, Phe152–Phe172, Ala186–Ile206, Leu276–Leu296, Ile308–Trp328, Gly351–Val371, Ala397–Gly417, and Ile418–Phe438.

It is found in the membrane. This is an uncharacterized protein from Schizosaccharomyces pombe (strain 972 / ATCC 24843) (Fission yeast).